The following is a 499-amino-acid chain: Probable alpha-L-arabinofuranosidase B (499 aa).

The N-terminal stretch at 1 to 18 (MFSRRNLVALGLAATVSA) is a signal peptide. The interval 19–335 (GPCDIYEAGD…ENIVAAKYVS (317 aa)) is catalytic. Cystine bridges form between C21–C31, C81–C86, and C176–C177. An N-linked (GlcNAc...) asparagine glycan is attached at N83. A glycan (N-linked (GlcNAc...) asparagine) is linked at N202. Position 219 (D219) interacts with substrate. The Nucleophile role is filled by E221. The substrate site is built by N222, N223, and G296. D297 acts as the Proton donor in catalysis. An ABD region spans residues 336-499 (GSLVSGPSFT…SFEIETAFAS (164 aa)). An intrachain disulfide couples C401 to C439. Substrate contacts are provided by H416, N418, F419, D435, H463, D465, L468, and D488.

Belongs to the glycosyl hydrolase 54 family.

It localises to the secreted. The catalysed reaction is Hydrolysis of terminal non-reducing alpha-L-arabinofuranoside residues in alpha-L-arabinosides.. Its pathway is glycan metabolism; L-arabinan degradation. Alpha-L-arabinofuranosidase involved in the degradation of arabinoxylan, a major component of plant hemicellulose. Able to hydrolyze 1,5-, 1,3- and 1,2-alpha-linkages not only in L-arabinofuranosyl oligosaccharides, but also in polysaccharides containing terminal non-reducing L-arabinofuranoses in side chains, like L-arabinan, arabinogalactan and arabinoxylan. This chain is Probable alpha-L-arabinofuranosidase B (abfB), found in Aspergillus niger (strain ATCC MYA-4892 / CBS 513.88 / FGSC A1513).